Consider the following 205-residue polypeptide: Large ribosomal subunit protein uL4 (205 aa).

A disordered region spans residues lysine 44–serine 77. The segment covering valine 51–glycine 71 has biased composition (basic residues).

The protein belongs to the universal ribosomal protein uL4 family. Part of the 50S ribosomal subunit.

In terms of biological role, one of the primary rRNA binding proteins, this protein initially binds near the 5'-end of the 23S rRNA. It is important during the early stages of 50S assembly. It makes multiple contacts with different domains of the 23S rRNA in the assembled 50S subunit and ribosome. Functionally, forms part of the polypeptide exit tunnel. This is Large ribosomal subunit protein uL4 from Lactobacillus delbrueckii subsp. bulgaricus (strain ATCC 11842 / DSM 20081 / BCRC 10696 / JCM 1002 / NBRC 13953 / NCIMB 11778 / NCTC 12712 / WDCM 00102 / Lb 14).